A 438-amino-acid polypeptide reads, in one-letter code: Thymidine phosphorylase (438 aa).

The protein belongs to the thymidine/pyrimidine-nucleoside phosphorylase family. As to quaternary structure, homodimer.

It catalyses the reaction thymidine + phosphate = 2-deoxy-alpha-D-ribose 1-phosphate + thymine. It functions in the pathway pyrimidine metabolism; dTMP biosynthesis via salvage pathway; dTMP from thymine: step 1/2. Its function is as follows. The enzymes which catalyze the reversible phosphorolysis of pyrimidine nucleosides are involved in the degradation of these compounds and in their utilization as carbon and energy sources, or in the rescue of pyrimidine bases for nucleotide synthesis. This is Thymidine phosphorylase from Burkholderia orbicola (strain MC0-3).